Reading from the N-terminus, the 366-residue chain is Spermidine/putrescine import ATP-binding protein PotA (366 aa).

The ABC transporter domain maps to 14–247; the sequence is ISARALRKVY…PADRFVADFI (234 aa). 49-56 contributes to the ATP binding site; that stretch reads GPSGCGKT.

It belongs to the ABC transporter superfamily. Spermidine/putrescine importer (TC 3.A.1.11.1) family. As to quaternary structure, the complex is composed of two ATP-binding proteins (PotA), two transmembrane proteins (PotB and PotC) and a solute-binding protein (PotD).

Its subcellular location is the cell inner membrane. It carries out the reaction ATP + H2O + polyamine-[polyamine-binding protein]Side 1 = ADP + phosphate + polyamineSide 2 + [polyamine-binding protein]Side 1.. Functionally, part of the ABC transporter complex PotABCD involved in spermidine/putrescine import. Responsible for energy coupling to the transport system. This is Spermidine/putrescine import ATP-binding protein PotA from Ruegeria pomeroyi (strain ATCC 700808 / DSM 15171 / DSS-3) (Silicibacter pomeroyi).